Here is a 343-residue protein sequence, read N- to C-terminus: Transcription factor BPE (343 aa).

The bHLH domain occupies 142-192 (QATDSHSLAERARREKISERMKILQDLVPGCNKVIGKALVLDEIINYIQSL).

As to quaternary structure, homodimer. Specifically expressed in flowers, mostly in petals, inflorescence and flower buds. As to expression, expressed ubiquitously (leaves, flowers and stems).

Its subcellular location is the nucleus. Its function is as follows. Involved in the control of petal size, by interfering with postmitotic cell expansion to limit final petal cell size. This is Transcription factor BPE (BPE) from Arabidopsis thaliana (Mouse-ear cress).